The chain runs to 140 residues: Large ribosomal subunit protein uL14 (140 aa).

This sequence belongs to the universal ribosomal protein uL14 family.

This chain is Large ribosomal subunit protein uL14 (RPL23), found in Nicotiana tabacum (Common tobacco).